The chain runs to 130 residues: Small ribosomal subunit protein uS9 (130 aa).

Belongs to the universal ribosomal protein uS9 family.

The protein is Small ribosomal subunit protein uS9 of Saccharophagus degradans (strain 2-40 / ATCC 43961 / DSM 17024).